A 261-amino-acid polypeptide reads, in one-letter code: Small ribosomal subunit protein uS3 (261 aa).

In terms of domain architecture, KH type-2 spans 39 to 107; that stretch reads VREYLKRKLA…PVHVSIEEIR (69 aa). The tract at residues 213-261 is disordered; that stretch reads QPVAEEPAADDRRPRRTPGRPDGDKPRTRTVKKVDGAADPAKRVRKAGA. Over residues 221 to 254 the composition is skewed to basic and acidic residues; sequence ADDRRPRRTPGRPDGDKPRTRTVKKVDGAADPAK.

Belongs to the universal ribosomal protein uS3 family. Part of the 30S ribosomal subunit. Forms a tight complex with proteins S10 and S14.

Binds the lower part of the 30S subunit head. Binds mRNA in the 70S ribosome, positioning it for translation. The sequence is that of Small ribosomal subunit protein uS3 from Dechloromonas aromatica (strain RCB).